Reading from the N-terminus, the 381-residue chain is GDP-mannose transporter (381 aa).

Over 1 to 44 the chain is Cytoplasmic; it reads MAEGKKTDDYTIQMDSIDQGNKSFEAPPPPQPRSPPSGSLSNNP. Residues 19-41 form a disordered region; the sequence is QGNKSFEAPPPPQPRSPPSGSLS. The span at 26–35 shows a compositional bias: pro residues; the sequence is APPPPQPRSP. The chain crosses the membrane as a helical span at residues 45–65; the sequence is ILPVLAYCGSSILMTVMNKYV. Over 66-70 the chain is Lumenal; sequence LSGTD. The chain crosses the membrane as a helical span at residues 71–91; the sequence is FNLNFFLLCIQSLVCIIAIQT. Over 92-109 the chain is Cytoplasmic; sequence CKSCGLITYRDFSADEAR. The chain crosses the membrane as a helical span at residues 110–126; that stretch reads KWFPITLLLIGMIYTGS. Over 127-133 the chain is Lumenal; it reads KALQFLS. The chain crosses the membrane as a helical span at residues 134-150; sequence IPVYTIFKNLTIILIAY. The Cytoplasmic segment spans residues 151 to 159; sequence GEVLWFGGS. The chain crosses the membrane as a helical span at residues 160 to 181; sequence VTGLTLFSFGLMVLSSIIAAWA. At 182–199 the chain is on the lumenal side; the sequence is DIKHAVESNGDATAKVST. A helical membrane pass occupies residues 200-220; it reads LNAGYIWMLVNCLCTSSYVLG. Residues 221-234 are Cytoplasmic-facing; the sequence is MRKRIKLTNFKDFD. The helical transmembrane segment at 235 to 255 threads the bilayer; that stretch reads TMFYNNLLSIPVLIVLSAFLE. Over 256–273 the chain is Lumenal; the sequence is DWSSTNVNRNFPPMDRNS. The helical transmembrane segment at 274 to 294 threads the bilayer; that stretch reads IVFAMILSGLSSVFISYTSAW. Topologically, residues 295–302 are cytoplasmic; it reads CVRVTSST. Residues 303–323 form a helical membrane-spanning segment; it reads TYSMVGALNKLPIAISGLIFF. The Lumenal segment spans residues 324–326; it reads DAP. Residues 327-347 form a helical membrane-spanning segment; sequence VTFPSVSAIVVGFVSGIVYAV. Residues 348–381 lie on the Cytoplasmic side of the membrane; it reads AKIKQNAKPRTGVLPTANPPVSASSQSMRDSLRS. The segment at 358-381 is disordered; the sequence is TGVLPTANPPVSASSQSMRDSLRS. Polar residues predominate over residues 366-381; the sequence is PPVSASSQSMRDSLRS.

It belongs to the TPT transporter family. SLC35D subfamily. As to quaternary structure, homooligomer.

It localises to the golgi apparatus membrane. It is found in the cytoplasmic vesicle membrane. The protein localises to the endoplasmic reticulum membrane. Functionally, involved in the import of GDP-mannose from the cytoplasm into the Golgi lumen. The polypeptide is GDP-mannose transporter (gmt1) (Aspergillus niger (strain ATCC MYA-4892 / CBS 513.88 / FGSC A1513)).